A 51-amino-acid chain; its full sequence is uncharacterized protein (51 aa).

A helical transmembrane segment spans residues 10 to 29; that stretch reads LFLYHPLFLLLLYIYLVLFI.

The protein resides in the plastid. Its subcellular location is the chloroplast membrane. This is an uncharacterized protein from Anthoceros angustus (Hornwort).